A 241-amino-acid chain; its full sequence is Alpha/beta-tubulin-N-acetyltransferase 9 (241 aa).

The 148-residue stretch at 34–181 (EELRHLTASE…VTLRLAVSEP (148 aa)) folds into the N-acetyltransferase domain.

It belongs to the acetyltransferase family. GNAT subfamily.

The enzyme catalyses N-terminal L-methionyl-[tubulin] + acetyl-CoA = N-terminal N(alpha)-acetyl-L-methionyl-[tubulin] + CoA + H(+). Its function is as follows. N-acetyltransferase that mediates the acetylation of the N-terminal residues of alpha- and beta-tubulin. In Mus musculus (Mouse), this protein is Alpha/beta-tubulin-N-acetyltransferase 9 (Nat9).